A 432-amino-acid chain; its full sequence is Adenylosuccinate synthetase (432 aa).

GTP is bound by residues 12–18 and 40–42; these read GDEGKGK and GHT. Aspartate 13 acts as the Proton acceptor in catalysis. Mg(2+) contacts are provided by aspartate 13 and glycine 40. Residues 13–16, 38–41, threonine 130, arginine 144, glutamine 226, threonine 241, and arginine 305 each bind IMP; these read DEGK and NAGH. Histidine 41 acts as the Proton donor in catalysis. 301–307 is a binding site for substrate; that stretch reads STTGRSR. GTP is bound by residues arginine 307, 333 to 335, and 415 to 417; these read KLD and SVG.

Belongs to the adenylosuccinate synthetase family. As to quaternary structure, homodimer. Requires Mg(2+) as cofactor.

The protein localises to the cytoplasm. The enzyme catalyses IMP + L-aspartate + GTP = N(6)-(1,2-dicarboxyethyl)-AMP + GDP + phosphate + 2 H(+). It participates in purine metabolism; AMP biosynthesis via de novo pathway; AMP from IMP: step 1/2. In terms of biological role, plays an important role in the de novo pathway of purine nucleotide biosynthesis. Catalyzes the first committed step in the biosynthesis of AMP from IMP. This chain is Adenylosuccinate synthetase, found in Bdellovibrio bacteriovorus (strain ATCC 15356 / DSM 50701 / NCIMB 9529 / HD100).